A 295-amino-acid chain; its full sequence is UDP-N-acetylenolpyruvoylglucosamine reductase (295 aa).

In terms of domain architecture, FAD-binding PCMH-type spans 23–188; that stretch reads QVGGPADFLA…ISAKFALKPG (166 aa). Residue Arg-167 is part of the active site. Residue Ser-217 is the Proton donor of the active site. Residue Glu-287 is part of the active site.

The protein belongs to the MurB family. FAD is required as a cofactor.

The protein localises to the cytoplasm. It carries out the reaction UDP-N-acetyl-alpha-D-muramate + NADP(+) = UDP-N-acetyl-3-O-(1-carboxyvinyl)-alpha-D-glucosamine + NADPH + H(+). The protein operates within cell wall biogenesis; peptidoglycan biosynthesis. Functionally, cell wall formation. This Streptococcus equi subsp. zooepidemicus (strain H70) protein is UDP-N-acetylenolpyruvoylglucosamine reductase.